The sequence spans 523 residues: Bifunctional purine biosynthesis protein PurH (523 aa).

The MGS-like domain occupies 1–149 (MSDPVIKRAL…KNNESVTVIT (149 aa)).

It belongs to the PurH family.

It carries out the reaction (6R)-10-formyltetrahydrofolate + 5-amino-1-(5-phospho-beta-D-ribosyl)imidazole-4-carboxamide = 5-formamido-1-(5-phospho-D-ribosyl)imidazole-4-carboxamide + (6S)-5,6,7,8-tetrahydrofolate. The enzyme catalyses IMP + H2O = 5-formamido-1-(5-phospho-D-ribosyl)imidazole-4-carboxamide. The protein operates within purine metabolism; IMP biosynthesis via de novo pathway; 5-formamido-1-(5-phospho-D-ribosyl)imidazole-4-carboxamide from 5-amino-1-(5-phospho-D-ribosyl)imidazole-4-carboxamide (10-formyl THF route): step 1/1. Its pathway is purine metabolism; IMP biosynthesis via de novo pathway; IMP from 5-formamido-1-(5-phospho-D-ribosyl)imidazole-4-carboxamide: step 1/1. The chain is Bifunctional purine biosynthesis protein PurH from Chlorobaculum parvum (strain DSM 263 / NCIMB 8327) (Chlorobium vibrioforme subsp. thiosulfatophilum).